A 189-amino-acid chain; its full sequence is uncharacterized protein (189 aa).

An N-terminal signal peptide occupies residues 1-23; the sequence is MIKTTPHKIVILMGILLSPSVFA. The tract at residues 104–125 is disordered; it reads SSPKLIIPQSGDSSSTTSNIGM. The segment covering 113–123 has biased composition (polar residues); sequence SGDSSSTTSNI.

This sequence belongs to the fimbrial protein family.

The protein resides in the fimbrium. Part of the yadCKLM-htrE-yadVN fimbrial operon. Could contribute to adhesion to various surfaces in specific environmental niches. This is an uncharacterized protein from Escherichia coli (strain K12).